Consider the following 62-residue polypeptide: Potassium channel toxin gamma-KTx 1.1 (62 aa).

The signal sequence occupies residues Met-1–Met-20. Intrachain disulfides connect Cys-25–Cys-43, Cys-31–Cys-54, Cys-40–Cys-59, and Cys-44–Cys-61.

Belongs to the ergtoxin family. Gamma-KTx 1 subfamily. After protein storage at -20 Celsius degrees during a couple of months, the Met-55 of a small number of toxins is naturally oxidized. This oxidized form is about three orders of magnitude less efficient (IC(50)=15 uM) than non-oxidized form. In terms of tissue distribution, expressed by the venom gland.

It is found in the secreted. In terms of biological role, blocks human and rat Kv11.1/KCNH2/ERG1 and Kv11.3/KCNH7/ERG3, as well as rat (but not human) Kv11.2/KCNH6/ERG2 by binding to channel outer vestibule (S5P domain) with a 1:1 stoichiometry. Inhibition data are the following: hERG1 (reversible, IC(50)~7 nM), rERG1 (reversible, Kd=6.8 nM), rERG2 (irreversible, Kd=2.8 nM), hERG3 (irreversible, Kd=4.05 nM) and rERG3 (reversible, Kd=38.1 nM) potassium channels. The toxin potency is not affected by elevating potassium ion concentration from 2 to 98 mM. This toxin only blocks channels in a closed state. At high toxin concentrations, block of Kv11.1/KCNH2/ERG1 macroscopic current is incomplete (93.5%). This suggests a kinetic mechanism model with two different states of toxin-channel binding (T+C=TC*=TC; in the TC* state, the toxin binds the channel but does not occlude the pore, whereas in the TC state the toxin binds and occludes the pore). In this model, incomplete block is explained by the relatively fast dissociation rate from the blocked channel conformation (TC) relative to the rate of conversion of the toxin-channel encounter complex (TC*) to the blocked channel conformation (TC). The sequence is that of Potassium channel toxin gamma-KTx 1.1 from Centruroides noxius (Mexican scorpion).